Reading from the N-terminus, the 86-residue chain is Large ribosomal subunit protein bL27 (86 aa).

A disordered region spans residues 1–24 (MAHKKAMGSTENTRDSNPSYLGVK). The segment covering 9–19 (STENTRDSNPS) has biased composition (polar residues).

This sequence belongs to the bacterial ribosomal protein bL27 family.

The polypeptide is Large ribosomal subunit protein bL27 (Salinibacter ruber (strain DSM 13855 / M31)).